Reading from the N-terminus, the 100-residue chain is Urease subunit gamma (100 aa).

This sequence belongs to the urease gamma subunit family. Heterotrimer of UreA (gamma), UreB (beta) and UreC (alpha) subunits. Three heterotrimers associate to form the active enzyme.

Its subcellular location is the cytoplasm. The catalysed reaction is urea + 2 H2O + H(+) = hydrogencarbonate + 2 NH4(+). It participates in nitrogen metabolism; urea degradation; CO(2) and NH(3) from urea (urease route): step 1/1. In Pseudomonas fluorescens (strain ATCC BAA-477 / NRRL B-23932 / Pf-5), this protein is Urease subunit gamma.